Consider the following 395-residue polypeptide: Succinyl-diaminopimelate desuccinylase (395 aa).

Histidine 74 provides a ligand contact to Zn(2+). Aspartate 76 is an active-site residue. Aspartate 107 is a Zn(2+) binding site. Glutamate 141 serves as the catalytic Proton acceptor. Glutamate 142, glutamate 170, and histidine 368 together coordinate Zn(2+).

The protein belongs to the peptidase M20A family. DapE subfamily. As to quaternary structure, homodimer. Requires Zn(2+) as cofactor. The cofactor is Co(2+).

The catalysed reaction is N-succinyl-(2S,6S)-2,6-diaminopimelate + H2O = (2S,6S)-2,6-diaminopimelate + succinate. The protein operates within amino-acid biosynthesis; L-lysine biosynthesis via DAP pathway; LL-2,6-diaminopimelate from (S)-tetrahydrodipicolinate (succinylase route): step 3/3. Its function is as follows. Catalyzes the hydrolysis of N-succinyl-L,L-diaminopimelic acid (SDAP), forming succinate and LL-2,6-diaminopimelate (DAP), an intermediate involved in the bacterial biosynthesis of lysine and meso-diaminopimelic acid, an essential component of bacterial cell walls. In Brucella melitensis biotype 1 (strain ATCC 23456 / CCUG 17765 / NCTC 10094 / 16M), this protein is Succinyl-diaminopimelate desuccinylase.